The following is a 711-amino-acid chain: Nuclear intron maturase 1, mitochondrial (711 aa).

The Reverse transcriptase domain maps to 147–459 (KDKISMNGGE…RGIQFLDHII (313 aa)). Positions 484-653 (GTLLSVSASL…QVLQEYIRLQ (170 aa)) are intron maturase type-2.

It belongs to the plant nuclear intron maturase (nMat) family. As to expression, expressed at low levels in seedlings and accumulates in adult plants.

Its subcellular location is the mitochondrion. Its function is as follows. Nuclear-encoded maturase required for splicing of group-II introns in mitochondria. Necessary for mitochondrial biogenesis during early developmental stages. Involved in the splicing of mitochondrial NAD4 transcripts. Required for trans-splicing of NAD1 intron 1 and also functions in cis-splicing of NAD2 intron 1 and NAD4 intron 2. Required for the regulation of fundamental metabolic pathways such as amino acid metabolism, triacylglycerol degradation and polysaccharide synthesis (cellulose and starch) during the early stage of plant growth. Implicated in stress responses. The chain is Nuclear intron maturase 1, mitochondrial from Arabidopsis thaliana (Mouse-ear cress).